Consider the following 181-residue polypeptide: NADH-quinone oxidoreductase subunit I (181 aa).

4Fe-4S ferredoxin-type domains are found at residues 52–81 (TRDSAGHERCVACNLCAVSCPVGCISLKKS) and 91–120 (EFFRINFSRCIFCGMCEEACPTAAIQLISD). Residues C61, C64, C67, C71, C100, C103, C106, and C110 each contribute to the [4Fe-4S] cluster site.

The protein belongs to the complex I 23 kDa subunit family. In terms of assembly, NDH-1 is composed of 13 different subunits. Subunits NuoA, H, J, K, L, M, N constitute the membrane sector of the complex. Requires [4Fe-4S] cluster as cofactor.

It is found in the cell inner membrane. It carries out the reaction a quinone + NADH + 5 H(+)(in) = a quinol + NAD(+) + 4 H(+)(out). Functionally, NDH-1 shuttles electrons from NADH, via FMN and iron-sulfur (Fe-S) centers, to quinones in the respiratory chain. The immediate electron acceptor for the enzyme in this species is believed to be ubiquinone. Couples the redox reaction to proton translocation (for every two electrons transferred, four hydrogen ions are translocated across the cytoplasmic membrane), and thus conserves the redox energy in a proton gradient. The polypeptide is NADH-quinone oxidoreductase subunit I (Blochmanniella floridana).